The following is a 31-amino-acid chain: MLGNMNVFMAVLGIILFSGFLAAYFSHKWDD.

The Periplasmic portion of the chain corresponds to 1–4; it reads MLGN. A helical membrane pass occupies residues 5–25; it reads MNVFMAVLGIILFSGFLAAYF. Residues 26-31 lie on the Cytoplasmic side of the membrane; it reads SHKWDD.

As to quaternary structure, interacts with MgtA.

The protein resides in the cell inner membrane. In terms of biological role, modulates intracellular Mg(2+) levels to maintain cellular integrity upon Mg(2+) limitation. Acts by binding and stabilizing the Mg(2+) transporter MgtA, thereby leading to increased intracellular level of Mg(2+). May inhibit FtsH proteolysis of MgtA. The sequence is that of Small protein MgtS from Escherichia coli (strain K12).